We begin with the raw amino-acid sequence, 444 residues long: Na(+)-translocating NADH-quinone reductase subunit A (444 aa).

Belongs to the NqrA family. In terms of assembly, composed of six subunits; NqrA, NqrB, NqrC, NqrD, NqrE and NqrF.

It catalyses the reaction a ubiquinone + n Na(+)(in) + NADH + H(+) = a ubiquinol + n Na(+)(out) + NAD(+). NQR complex catalyzes the reduction of ubiquinone-1 to ubiquinol by two successive reactions, coupled with the transport of Na(+) ions from the cytoplasm to the periplasm. NqrA to NqrE are probably involved in the second step, the conversion of ubisemiquinone to ubiquinol. The sequence is that of Na(+)-translocating NADH-quinone reductase subunit A from Shewanella frigidimarina (strain NCIMB 400).